Consider the following 87-residue polypeptide: Small ribosomal subunit protein uS17 (87 aa).

It belongs to the universal ribosomal protein uS17 family. In terms of assembly, part of the 30S ribosomal subunit.

Functionally, one of the primary rRNA binding proteins, it binds specifically to the 5'-end of 16S ribosomal RNA. The protein is Small ribosomal subunit protein uS17 of Chromobacterium violaceum (strain ATCC 12472 / DSM 30191 / JCM 1249 / CCUG 213 / NBRC 12614 / NCIMB 9131 / NCTC 9757 / MK).